We begin with the raw amino-acid sequence, 313 residues long: MSSREIRIATRQSALALWQAEYVKARLEQAHPGLTVTLLPMTSRGDKLLDAPLAKIGGKGLFVKELETALLEGAADIAVHSMKDVPMDFPEGLGLYTICEREDPRDAFVSNTYASLEQLPAGSVVGTSSLRRQAQLLARRPDLQIRFLRGNVNTRLAKLDAGEYDAIILAAAGLIRLGFESRIRSSISVDDSLPAGGQGAVGIECRTADSDLHALLEPLHHSDTALRVTAERALNKRLNGGCQVPIACYAIREGDQLWLRGLVGQPDGTQLLRAEGRAPLAEAEALGVRVAEDLLEQGAEAILEAVYGEAGHP.

Position 242 is an S-(dipyrrolylmethanemethyl)cysteine (C242).

The protein belongs to the HMBS family. As to quaternary structure, monomer. Dipyrromethane is required as a cofactor.

It carries out the reaction 4 porphobilinogen + H2O = hydroxymethylbilane + 4 NH4(+). It participates in porphyrin-containing compound metabolism; protoporphyrin-IX biosynthesis; coproporphyrinogen-III from 5-aminolevulinate: step 2/4. Its function is as follows. Tetrapolymerization of the monopyrrole PBG into the hydroxymethylbilane pre-uroporphyrinogen in several discrete steps. This chain is Porphobilinogen deaminase, found in Pseudomonas aeruginosa (strain UCBPP-PA14).